The chain runs to 201 residues: MANKGPSYGMSREVQSKIEKKYDEELEERLVEWIVMQCGPDVGRPDRGRLGFQVWLKNGVILSKLVNSLYPEGSKPVKVPENPPSMVFKQMEQVAQFLKAAEDYGVTKTDMFQTVDLFEGKDMAAVQRTVMALGSLAVTKNDGHYRGDPNWFMKKAQEHKREFTDSQLQEGKHVIGLQMGSNRGASQAGMTGYGRPRQIIS.

Ala2 is subject to N-acetylalanine. The region spanning 24-137 (EELEERLVEW…RTVMALGSLA (114 aa)) is the Calponin-homology (CH) domain. The segment at 154 to 161 (KKAQEHKR) is could be involved in actin-binding. Phosphoserine is present on Ser166. The residue at position 172 (Lys172) is an N6-acetyllysine. The Calponin-like repeat unit spans residues 175–200 (IGLQMGSNRGASQAGMTGYGRPRQII). Ser181 is modified (phosphoserine). Arg183 bears the Omega-N-methylarginine mark.

Belongs to the calponin family. Smooth muscle and mesenchymal cells but not in skeletal muscle or lymphocytes.

The protein localises to the cytoplasm. In terms of biological role, actin cross-linking/gelling protein. This is Transgelin (Tagln) from Rattus norvegicus (Rat).